The following is a 115-amino-acid chain: Ribosome-binding factor A (115 aa).

The protein belongs to the RbfA family. As to quaternary structure, monomer. Binds 30S ribosomal subunits, but not 50S ribosomal subunits or 70S ribosomes.

The protein resides in the cytoplasm. One of several proteins that assist in the late maturation steps of the functional core of the 30S ribosomal subunit. Associates with free 30S ribosomal subunits (but not with 30S subunits that are part of 70S ribosomes or polysomes). Required for efficient processing of 16S rRNA. May interact with the 5'-terminal helix region of 16S rRNA. In Bacillus velezensis (strain DSM 23117 / BGSC 10A6 / LMG 26770 / FZB42) (Bacillus amyloliquefaciens subsp. plantarum), this protein is Ribosome-binding factor A.